The sequence spans 599 residues: Putative sensor histidine kinase NtrY-like (599 aa).

Helical transmembrane passes span 17 to 37, 44 to 64, 85 to 105, and 285 to 305; these read ILIL…FYVI, FSTI…LGIL, IVIA…VFSV, and IMFI…GVLF. The region spanning 307–361 is the HAMP domain; the sequence is AQIVKPIKKLVTATDKVKDGDLTVQVPENEVDKDEIGTLYVAFNRMIKQLSRQQR. The Histidine kinase domain occupies 378–589; that stretch reads KVAHEIKNPL…IIDIKFDLKE (212 aa). Histidine 381 carries the post-translational modification Phosphohistidine; by autocatalysis.

Its subcellular location is the cell membrane. It catalyses the reaction ATP + protein L-histidine = ADP + protein N-phospho-L-histidine.. Functionally, member of the two-component regulatory system RT0603/RT0550. This Rickettsia typhi (strain ATCC VR-144 / Wilmington) protein is Putative sensor histidine kinase NtrY-like.